Consider the following 322-residue polypeptide: HPr kinase/phosphorylase (322 aa).

Residues histidine 146 and lysine 167 contribute to the active site. 161–168 is an ATP binding site; the sequence is GDSGLGKS. Mg(2+) is bound at residue serine 168. Aspartate 185 acts as the Proton acceptor; for phosphorylation activity. Proton donor; for dephosphorylation activity in catalysis. The important for the catalytic mechanism of both phosphorylation and dephosphorylation stretch occupies residues 209 to 218; the sequence is LEVRGLGLLD. Glutamate 210 serves as a coordination point for Mg(2+). Arginine 250 is an active-site residue. Residues 271–276 form an important for the catalytic mechanism of dephosphorylation region; it reads QVAAGR.

It belongs to the HPrK/P family. As to quaternary structure, homohexamer. The cofactor is Mg(2+).

The catalysed reaction is [HPr protein]-L-serine + ATP = [HPr protein]-O-phospho-L-serine + ADP + H(+). It carries out the reaction [HPr protein]-O-phospho-L-serine + phosphate + H(+) = [HPr protein]-L-serine + diphosphate. Its function is as follows. Catalyzes the ATP- as well as the pyrophosphate-dependent phosphorylation of a specific serine residue in HPr, a phosphocarrier protein of the phosphoenolpyruvate-dependent sugar phosphotransferase system (PTS). HprK/P also catalyzes the pyrophosphate-producing, inorganic phosphate-dependent dephosphorylation (phosphorolysis) of seryl-phosphorylated HPr (P-Ser-HPr). The sequence is that of HPr kinase/phosphorylase from Paraburkholderia phymatum (strain DSM 17167 / CIP 108236 / LMG 21445 / STM815) (Burkholderia phymatum).